The chain runs to 383 residues: 8-amino-7-oxononanoate synthase (383 aa).

Residue Arg-21 participates in substrate binding. Position 108–109 (Gly-108–Tyr-109) interacts with pyridoxal 5'-phosphate. Residue His-133 coordinates substrate. Residues Ser-179, His-207, and Thr-233 each coordinate pyridoxal 5'-phosphate. At Lys-236 the chain carries N6-(pyridoxal phosphate)lysine. Residue Thr-350 participates in substrate binding.

Belongs to the class-II pyridoxal-phosphate-dependent aminotransferase family. BioF subfamily. Homodimer. Pyridoxal 5'-phosphate is required as a cofactor.

It carries out the reaction 6-carboxyhexanoyl-[ACP] + L-alanine + H(+) = (8S)-8-amino-7-oxononanoate + holo-[ACP] + CO2. It functions in the pathway cofactor biosynthesis; biotin biosynthesis. Catalyzes the decarboxylative condensation of pimeloyl-[acyl-carrier protein] and L-alanine to produce 8-amino-7-oxononanoate (AON), [acyl-carrier protein], and carbon dioxide. The chain is 8-amino-7-oxononanoate synthase from Serratia proteamaculans (strain 568).